Here is a 113-residue protein sequence, read N- to C-terminus: U11-theraphotoxin-Hhn1a (113 aa).

The N-terminal stretch at 1–21 is a signal peptide; sequence MNTVRVTFLLVFVLAVSLGQA. Positions 22–74 are excised as a propeptide; the sequence is DKDENRMEMQEKTEQGKGYLDFAENLLPQKLEELEAKLLEEDSEESRNSRQKR. Positions 59 to 69 are enriched in basic and acidic residues; sequence LLEEDSEESRN. The segment at 59–83 is disordered; that stretch reads LLEEDSEESRNSRQKRCIGEGVPCD. Intrachain disulfides connect Cys-75/Cys-90, Cys-82/Cys-95, and Cys-89/Cys-110.

This sequence belongs to the neurotoxin 14 (magi-1) family. 01 (HNTX-16) subfamily. Expressed by the venom gland.

Its subcellular location is the secreted. In terms of biological role, probable ion channel inhibitor. The polypeptide is U11-theraphotoxin-Hhn1a (Cyriopagopus hainanus (Chinese bird spider)).